A 156-amino-acid polypeptide reads, in one-letter code: Protein GLUTAMINE DUMPER 4 (156 aa).

Topologically, residues 1 to 39 (MRPLSIKPTSLDVARHATSVESFGNHRPPISPWHSPVPY) are extracellular. Residues 40–60 (LFGGLAAMLGLIAFALLILAC) form a helical membrane-spanning segment. The Cytoplasmic portion of the chain corresponds to 61–156 (SYWRLSTSGD…AKENEETTSQ (96 aa)). The interval 67 to 87 (TSGDDSGERVDEEKESRSGVK) is disordered. Over residues 72–84 (SGERVDEEKESRS) the composition is skewed to basic and acidic residues. A VIMAG motif is present at residues 99 to 103 (VIMAG). The segment at 136–156 (AGEEKMGDREKAKENEETTSQ) is disordered.

The protein belongs to the GLUTAMINE DUMPER 1 (TC 9.B.60) family. Expressed in the vascular tissues, even in the minor veins of the leaves.

Its subcellular location is the membrane. Functionally, probable subunit of an amino acid transporter involved in the regulation of the amino acid metabolism. Stimulates amino acid export by activating nonselective amino acid facilitators. The chain is Protein GLUTAMINE DUMPER 4 (GDU4) from Arabidopsis thaliana (Mouse-ear cress).